A 303-amino-acid polypeptide reads, in one-letter code: Digeranylgeranylglyceryl phosphate synthase (303 aa).

7 consecutive transmembrane segments (helical) span residues 23 to 43, 88 to 108, 130 to 150, 164 to 184, 206 to 228, 232 to 254, and 272 to 292; these read VLGVIAGAALLGEVNVAAAIA, LALALLALGPLLGLAVGPLTG, LPGNLAVSFSTASTLLYGSLA, TIPIILMVFLMTLAREVVKGV, FALRAALALACASLALAYLAAPL, GYAFLAFVTLGGLLSLASVAACL, and VAMFLGLIGILVDRLVQPVFY.

It belongs to the UbiA prenyltransferase family. DGGGP synthase subfamily. Mg(2+) serves as cofactor.

It is found in the cell membrane. The enzyme catalyses sn-3-O-(geranylgeranyl)glycerol 1-phosphate + (2E,6E,10E)-geranylgeranyl diphosphate = 2,3-bis-O-(geranylgeranyl)-sn-glycerol 1-phosphate + diphosphate. The protein operates within membrane lipid metabolism; glycerophospholipid metabolism. Functionally, prenyltransferase that catalyzes the transfer of the geranylgeranyl moiety of geranylgeranyl diphosphate (GGPP) to the C2 hydroxyl of (S)-3-O-geranylgeranylglyceryl phosphate (GGGP). This reaction is the second ether-bond-formation step in the biosynthesis of archaeal membrane lipids. The polypeptide is Digeranylgeranylglyceryl phosphate synthase (Ignicoccus hospitalis (strain KIN4/I / DSM 18386 / JCM 14125)).